The sequence spans 80 residues: Small ribosomal subunit protein bS21 (80 aa).

This sequence belongs to the bacterial ribosomal protein bS21 family.

The sequence is that of Small ribosomal subunit protein bS21 from Rhodospirillum rubrum (strain ATCC 11170 / ATH 1.1.1 / DSM 467 / LMG 4362 / NCIMB 8255 / S1).